Reading from the N-terminus, the 457-residue chain is Trigger factor (457 aa).

The region spanning 162-243 (GDFVSIDLSA…VQTVKERELP (82 aa)) is the PPIase FKBP-type domain. The interval 434–457 (AELFGSSEDETEADASDSAESEDK) is disordered. A compositionally biased stretch (acidic residues) spans 440–457 (SEDETEADASDSAESEDK).

It belongs to the FKBP-type PPIase family. Tig subfamily.

The protein localises to the cytoplasm. It catalyses the reaction [protein]-peptidylproline (omega=180) = [protein]-peptidylproline (omega=0). In terms of biological role, involved in protein export. Acts as a chaperone by maintaining the newly synthesized protein in an open conformation. Functions as a peptidyl-prolyl cis-trans isomerase. The protein is Trigger factor of Rhodococcus erythropolis (strain PR4 / NBRC 100887).